Consider the following 104-residue polypeptide: Small ribosomal subunit protein bS16 (104 aa).

The protein belongs to the bacterial ribosomal protein bS16 family.

The protein is Small ribosomal subunit protein bS16 of Gemmatimonas aurantiaca (strain DSM 14586 / JCM 11422 / NBRC 100505 / T-27).